Here is a 615-residue protein sequence, read N- to C-terminus: Sodium-dependent neutral amino acid transporter B(0)AT3 (615 aa).

Over 1–26 the chain is Cytoplasmic; sequence MAQASGMDPLVDIEDERPKWDNKLQY. Residues 27 to 47 traverse the membrane as a helical segment; sequence LLSCIGFAVGLGNIWRFPYLC. Topologically, residues 48 to 52 are extracellular; it reads QTHGG. The helical transmembrane segment at 53 to 73 threads the bilayer; the sequence is GAFLIPYFIALVFEGIPLFYI. The Cytoplasmic portion of the chain corresponds to 74–105; that stretch reads ELAIGQRLRRGSIGVWKTISPYLGGVGLGCFS. The chain crosses the membrane as a helical span at residues 106–126; sequence VSFLVSLYYNTVLLWVLWFFL. Residues 127 to 177 lie on the Extracellular side of the membrane; that stretch reads NSFQHPLPWSTCPLDLNRTGFVQECQSSGTVSYFWYRQTLNITSDISNTGT. N-linked (GlcNAc...) asparagine glycosylation is found at Asn-143 and Asn-167. A helical transmembrane segment spans residues 178–198; that stretch reads IQWKLFLCLVACWSTVYLCVI. Residues 199 to 206 lie on the Cytoplasmic side of the membrane; the sequence is RGIESTGK. Residues 207 to 227 traverse the membrane as a helical segment; that stretch reads VIYFTALFPYLVLTIFLIRGL. Topologically, residues 228-255 are extracellular; sequence TLPGATEGLIYLFTPNMKTLQNPRVWLD. A helical transmembrane segment spans residues 256-276; it reads AATQIFFSLSLAFGGHIAFAS. Topologically, residues 277-288 are cytoplasmic; the sequence is YNPPRNNCEKDA. Residues 289-309 traverse the membrane as a helical segment; that stretch reads VIIALVNSMTSLYASIAIFSV. The Extracellular segment spans residues 310–397; it reads MGFKASNDYG…FTEAVLHMPG (88 aa). The N-linked (GlcNAc...) asparagine glycan is linked to Asn-353. The helical transmembrane segment at 398 to 418 threads the bilayer; sequence ASVWSVLFFGMLFTLGLSSMF. Over 419-441 the chain is Cytoplasmic; the sequence is GNMEGVITPLLDMGILPKGIPKE. A helical transmembrane segment spans residues 442 to 462; the sequence is VMTGVICFACFLSAICFTLQS. The Extracellular portion of the chain corresponds to 463–472; it reads GGYWLEIFDS. A helical membrane pass occupies residues 473–493; that stretch reads FAASLNLIIFAFMEVVGVIHI. At 494-520 the chain is on the cytoplasmic side; that stretch reads YGMKRFCDDIEWMTGRRPGLYWQVTWR. Residues 521–541 traverse the membrane as a helical segment; it reads VVSPMLLFGIFLSYIVLLIQT. The Extracellular segment spans residues 542-570; sequence PPSYKAWNPQYEHFPSREEKFYPGWVQVT. A helical membrane pass occupies residues 571-591; that stretch reads CVLLSFLPSLWVPGVALAQLL. The Cytoplasmic segment spans residues 592–615; that stretch reads SQYKQRWKATHLESGLKLQESRGC.

Belongs to the sodium:neurotransmitter symporter (SNF) (TC 2.A.22) family. SLC6A18 subfamily. Interacts with CLTRN; this interaction regulates the trafficking of SLC6A18 to the cell membrane and its activity. Expressed predominantly in kidney.

It localises to the apical cell membrane. The protein resides in the cell membrane. It catalyses the reaction L-alanine(out) + chloride(out) + 2 Na(+)(out) = L-alanine(in) + chloride(in) + 2 Na(+)(in). It carries out the reaction glycine(out) + chloride(out) + 2 Na(+)(out) = glycine(in) + chloride(in) + 2 Na(+)(in). The catalysed reaction is L-methionine(out) + chloride(out) + 2 Na(+)(out) = L-methionine(in) + chloride(in) + 2 Na(+)(in). The enzyme catalyses L-valine(out) + chloride(out) + 2 Na(+)(out) = L-valine(in) + chloride(in) + 2 Na(+)(in). It catalyses the reaction L-isoleucine(out) + chloride(out) + 2 Na(+)(out) = L-isoleucine(in) + chloride(in) + 2 Na(+)(in). It carries out the reaction L-serine(out) + chloride(out) + 2 Na(+)(out) = L-serine(in) + chloride(in) + 2 Na(+)(in). The catalysed reaction is L-leucine(out) + chloride(out) + 2 Na(+)(out) = L-leucine(in) + chloride(in) + 2 Na(+)(in). In terms of biological role, symporter that transports one amino acid molecule together with two sodium and one chloride ions in kidneys and plays a role in the neutral amino acids reabsorption. Preferentially transports neutral amino acids such as L-glycine and L-alanine but also other neutral amino acids. Required CLTRN for cell surface expression and for its amino acid transporter activity. The transport mechanism is pH-independent. The protein is Sodium-dependent neutral amino acid transporter B(0)AT3 of Mus musculus (Mouse).